A 468-amino-acid chain; its full sequence is Probable Xaa-Pro aminopeptidase PEPP (468 aa).

Positions 264, 275, 398, and 438 each coordinate Mn(2+).

Belongs to the peptidase M24B family. Mn(2+) serves as cofactor.

It carries out the reaction Release of any N-terminal amino acid, including proline, that is linked to proline, even from a dipeptide or tripeptide.. Catalyzes the removal of a penultimate prolyl residue from the N-termini of peptides. The polypeptide is Probable Xaa-Pro aminopeptidase PEPP (PEPP) (Ajellomyces dermatitidis (strain ER-3 / ATCC MYA-2586) (Blastomyces dermatitidis)).